Consider the following 100-residue polypeptide: MATVTDPRDIILAPVISEKSYGLIEDNVYTFIVHPDSNKTQIKIAIEKIFKVKVDSVNTANRQGKRKRTRSGFGQRKSTKRAIVTLAAGSKPIDLFGAPA.

Belongs to the universal ribosomal protein uL23 family. As to quaternary structure, part of the 50S ribosomal subunit. Contacts protein L29, and trigger factor when it is bound to the ribosome.

In terms of biological role, one of the early assembly proteins it binds 23S rRNA. One of the proteins that surrounds the polypeptide exit tunnel on the outside of the ribosome. Forms the main docking site for trigger factor binding to the ribosome. The polypeptide is Large ribosomal subunit protein uL23 (Mycobacterium sp. (strain JLS)).